Here is a 133-residue protein sequence, read N- to C-terminus: ATP synthase epsilon chain, chloroplastic (133 aa).

The protein belongs to the ATPase epsilon chain family. As to quaternary structure, F-type ATPases have 2 components, CF(1) - the catalytic core - and CF(0) - the membrane proton channel. CF(1) has five subunits: alpha(3), beta(3), gamma(1), delta(1), epsilon(1). CF(0) has three main subunits: a, b and c.

It is found in the plastid. It localises to the chloroplast thylakoid membrane. In terms of biological role, produces ATP from ADP in the presence of a proton gradient across the membrane. In Chara vulgaris (Common stonewort), this protein is ATP synthase epsilon chain, chloroplastic.